Here is a 334-residue protein sequence, read N- to C-terminus: G-protein coupled receptor 12 (334 aa).

The Extracellular portion of the chain corresponds to 1-48 (MNEDPKVNLSGLPRDCIDAGAPENISAAVPSQGSVAESEPELVVNPWD). Asn-8 and Asn-24 each carry an N-linked (GlcNAc...) asparagine glycan. The helical transmembrane segment at 49 to 69 (IVLCSSGTLICCENAVVVLII) threads the bilayer. At 70–78 (FHSPSLRAP) the chain is on the cytoplasmic side. The helical transmembrane segment at 79–99 (MFLLIGSLALADLLAGLGLII) threads the bilayer. Topologically, residues 100 to 113 (NFVFAYLLQSEATK) are extracellular. A helical transmembrane segment spans residues 114–134 (LVTIGLIVASFSASVCSLLAI). The Cytoplasmic portion of the chain corresponds to 135 to 158 (TVDRYLSLYYALTYHSERTVTFTY). The chain crosses the membrane as a helical span at residues 159 to 179 (VMLVMLWGTSICLGLLPVMGW). At 180-199 (NCLRDESTCSVVRPLTKNNA) the chain is on the extracellular side. Residues 200–220 (AILSISFLFMFALMLQLYIQI) traverse the membrane as a helical segment. Over 221-252 (CKIVMRHAHQIALQHHFLATSHYVTTRKGVST) the chain is Cytoplasmic. The chain crosses the membrane as a helical span at residues 253 to 273 (LALILGTFAACWMPFTLYSLI). The Extracellular portion of the chain corresponds to 274–282 (ADYTYPSIY). The helical transmembrane segment at 283–303 (TYATLLPATYNSIINPVIYAF) threads the bilayer. Residues 304-334 (RNQEIQKALCLICCGCIPSSLSQRARSPSDV) lie on the Cytoplasmic side of the membrane. A lipid anchor (S-palmitoyl cysteine) is attached at Cys-317. Phosphoserine occurs at positions 330 and 332.

This sequence belongs to the G-protein coupled receptor 1 family. In terms of tissue distribution, expressed predominantly in the forebrain and a lesser extent in the hindbrain. Lower expression in the liver.

The protein localises to the cell membrane. Receptor with constitutive G(s) signaling activity that stimulates cyclic AMP production. Promotes neurite outgrowth and blocks myelin inhibition in neurons. This chain is G-protein coupled receptor 12 (Gpr12), found in Mus musculus (Mouse).